We begin with the raw amino-acid sequence, 440 residues long: MAAGTLYTYPENWRAFKALIAAQYSGAQVRVLSAPPHFHFGQTNRTPEFLRKFPAGKVPAFEGDDGFCVFESNAIAYYVSNEELRGSTPEAAAQVVQWVSFADSDIVPPASTWVFPTLGIMHHNKQATENAKEEVRRILGLLDAHLKTRTFLVGERVTLADITVVCTLLWLYKQVLEPSFRQAFPNTNRWFLTCINQPQFRAVLGEVKLCEKMAQFDAKKFAESQPKKDTPRKEKGSREEKLKPQAERKEGKEEKKAAAPAPEEELDECEQALAAEPKAKDPFAHLPKSTFVLDEFKRKYSNEDTLSVALPYFWDHFDKDGWSLWYSEYRFPEELTQTFMSCNLITGMFQRLDKLRKNAFASVILFGTNNSSSISGVWDFRGQELAFPLSPDWQVDYESYTWRKLDPGSEETQTLVREYFCWEGAFQHVGKAFNQGKIFK.

Alanine 2 carries the post-translational modification N-acetylalanine. Residues 2-87 form the GST N-terminal domain; that stretch reads AAGTLYTYPE…YVSNEELRGS (86 aa). Residues 88-216 enclose the GST C-terminal domain; that stretch reads TPEAAAQVVQ…VKLCEKMAQF (129 aa). Lysine 147 and lysine 212 each carry N6-acetyllysine. Residues 221–257 show a composition bias toward basic and acidic residues; sequence FAESQPKKDTPRKEKGSREEKLKPQAERKEGKEEKKA. The segment at 221–267 is disordered; sequence FAESQPKKDTPRKEKGSREEKLKPQAERKEGKEEKKAAAPAPEEELD. Lysine 256 is covalently cross-linked (Glycyl lysine isopeptide (Lys-Gly) (interchain with G-Cter in SUMO1)). The region spanning 279–440 is the EF-1-gamma C-terminal domain; that stretch reads AKDPFAHLPK…KAFNQGKIFK (162 aa). Residue lysine 288 forms a Glycyl lysine isopeptide (Lys-Gly) (interchain with G-Cter in SUMO2) linkage. At lysine 404 the chain carries N6-acetyllysine. Lysine 437 carries the N6-acetyllysine; alternate modification. Lysine 437 is subject to N6-malonyllysine; alternate.

As to quaternary structure, EF-1 is composed of four subunits: alpha, beta, delta, and gamma.

Its function is as follows. Probably plays a role in anchoring the complex to other cellular components. This is Elongation factor 1-gamma (EEF1G) from Bos taurus (Bovine).